A 359-amino-acid chain; its full sequence is Small ribosomal subunit biogenesis GTPase RsgA (359 aa).

In terms of domain architecture, CP-type G spans 101 to 259; it reads KRKGSQAIAS…LMDNPGIREV (159 aa). GTP is bound by residues 149 to 152 and 201 to 209; these read NKKD and GSSGAGKST. 4 residues coordinate Zn(2+): Cys284, Cys289, His291, and Cys297. Positions 331-359 are disordered; the sequence is DPEEARKKKQKDKQMSKALQKRLKDKGRK. The segment covering 349 to 359 has biased composition (basic residues); sequence LQKRLKDKGRK.

Belongs to the TRAFAC class YlqF/YawG GTPase family. RsgA subfamily. In terms of assembly, monomer. Associates with 30S ribosomal subunit, binds 16S rRNA. It depends on Zn(2+) as a cofactor.

It localises to the cytoplasm. Its function is as follows. One of several proteins that assist in the late maturation steps of the functional core of the 30S ribosomal subunit. Helps release RbfA from mature subunits. May play a role in the assembly of ribosomal proteins into the subunit. Circularly permuted GTPase that catalyzes slow GTP hydrolysis, GTPase activity is stimulated by the 30S ribosomal subunit. In Leptospira interrogans serogroup Icterohaemorrhagiae serovar copenhageni (strain Fiocruz L1-130), this protein is Small ribosomal subunit biogenesis GTPase RsgA.